Here is a 274-residue protein sequence, read N- to C-terminus: tRNA-cytidine(32) 2-sulfurtransferase (274 aa).

The PP-loop motif signature appears at 40-45 (SGGKDS). 3 residues coordinate [4Fe-4S] cluster: cysteine 115, cysteine 118, and cysteine 206.

The protein belongs to the TtcA family. In terms of assembly, homodimer. Requires Mg(2+) as cofactor. [4Fe-4S] cluster is required as a cofactor.

The protein localises to the cytoplasm. It carries out the reaction cytidine(32) in tRNA + S-sulfanyl-L-cysteinyl-[cysteine desulfurase] + AH2 + ATP = 2-thiocytidine(32) in tRNA + L-cysteinyl-[cysteine desulfurase] + A + AMP + diphosphate + H(+). It participates in tRNA modification. Catalyzes the ATP-dependent 2-thiolation of cytidine in position 32 of tRNA, to form 2-thiocytidine (s(2)C32). The sulfur atoms are provided by the cysteine/cysteine desulfurase (IscS) system. The sequence is that of tRNA-cytidine(32) 2-sulfurtransferase from Pseudomonas fluorescens (strain SBW25).